The following is a 326-amino-acid chain: MALTMLLLLVAAALTLIETRAGPHSLRYFHTAVSWPGLVEPRFIIVGYVDDTQFVRFDSDAENPRMEPRARWMEQEGPEYWERETQKAKGHEESFRVSLRTAQRYYNQSKGGSHTLQWMYGCDVGSDERLLRGYLQFAYEGRDYIALNEDLKTWTAADMAAQITLHKWEQAGIAERDRAYLEGACVQSLRRYLQLRKETLLCTDPPKAHVTHHPRSYGAVTLRCWALGFYPADITLTWQLNGEELTQDMELVETRPAGDGTFQKWASVVVPLGKEQNYTCHVNHEGLPEPLTLRWEPPPSTVSNMANVAILVVLVAWPSLELWWIL.

The signal sequence occupies residues 1-21 (MALTMLLLLVAAALTLIETRA). An alpha-1 region spans residues 22–111 (GPHSLRYFHT…AQRYYNQSKG (90 aa)). Topologically, residues 22-305 (GPHSLRYFHT…EPPPSTVSNM (284 aa)) are extracellular. The N-linked (GlcNAc...) asparagine glycan is linked to Asn107. The segment at 112–203 (GSHTLQWMYG…QLRKETLLCT (92 aa)) is alpha-2. Disulfide bonds link Cys122–Cys185 and Cys224–Cys280. Positions 204-295 (DPPKAHVTHH…GLPEPLTLRW (92 aa)) are alpha-3. The 89-residue stretch at 206–294 (PKAHVTHHPR…EGLPEPLTLR (89 aa)) folds into the Ig-like C1-type domain. Asn277 carries an N-linked (GlcNAc...) asparagine glycan. Residues 296–305 (EPPPSTVSNM) are connecting peptide. The chain crosses the membrane as a helical span at residues 306-326 (ANVAILVVLVAWPSLELWWIL).

The protein belongs to the MHC class I family. Heterodimer of an alpha chain and a beta chain (beta-2-microglobulin).

It localises to the membrane. Functionally, involved in the presentation of foreign antigens to the immune system. The polypeptide is H-2 class I histocompatibility antigen, Q8 alpha chain (H2-Q8) (Mus musculus (Mouse)).